The chain runs to 533 residues: Quinate permease (533 aa).

The Cytoplasmic segment spans residues 1 to 21 (MSILALVEDRPTPREVYNWRV). The chain crosses the membrane as a helical span at residues 22-42 (YLLAAVASFTSCMIGYDSAFI). Residues 43 to 67 (GTTLSLQSFQNEFNWESLNTDLISA) are Extracellular-facing. Residues 68-88 (NIVSLYQAGAFFGALFAYPIG) traverse the membrane as a helical segment. The Cytoplasmic portion of the chain corresponds to 89-94 (HFWGRR). A helical membrane pass occupies residues 95–115 (WGLMFSALIFFLGAGMMLGAN). Topologically, residues 116–127 (GDRGLGLIYGGR) are extracellular. The chain crosses the membrane as a helical span at residues 128–148 (VLAGIGVGAGSNICPIYISEM). At 149-156 (APPAIRGR) the chain is on the cytoplasmic side. The helical transmembrane segment at 157–177 (LVGVYELGWQIGGVVGFWINY) threads the bilayer. At 178 to 191 (GVDETLAPSHKQWI) the chain is on the extracellular side. Residues 192 to 212 (IPFAVQLIPAGLLIIGALLIR) form a helical membrane-spanning segment. At 213–282 (ESPRWLFLRG…AWTNKRILYR (70 aa)) the chain is on the cytoplasmic side. Residues 283-303 (LFLGSMLFLWQNGSGINAINY) form a helical membrane-spanning segment. The Extracellular portion of the chain corresponds to 304 to 324 (YSPRVFKSIGVSGGNTSLLTT). The chain crosses the membrane as a helical span at residues 325–346 (GIFGVVKAVITFVWLLYLIDHF). The Cytoplasmic segment spans residues 347–349 (GRR). Residues 350–370 (NLLLVGAAGGSVCLWIVGGYI) form a helical membrane-spanning segment. The Extracellular portion of the chain corresponds to 371–385 (KIAKPENNPEGTQLD). The chain crosses the membrane as a helical span at residues 386–406 (SGGIAAIFFFYLWTAFYTPSW). Topologically, residues 407-431 (NGTPWVINSEMFDPTVRSLAQACAA) are cytoplasmic. The helical transmembrane segment at 432 to 452 (ASNWLWNFLISRFTPQMFTSM) threads the bilayer. Over 453–454 (GY) the chain is Extracellular. Residues 455–475 (GVYFFFASLMILSIVFVFFLI) form a helical membrane-spanning segment. The Cytoplasmic segment spans residues 476–533 (PETKGVPLESMETLFDKKPVWHAHSQLIRELRENEEAFRADMGASGKGGVTKEYVEEA).

It belongs to the major facilitator superfamily. Sugar transporter (TC 2.A.1.1) family. In terms of assembly, interacts with creB. In terms of processing, ubiquitinated. Deubiquitinated by creB, probably to control its activity or amount.

It is found in the cell membrane. In terms of biological role, integral membrane transporter that imports quinic acid to be catabolized as a carbon source. The chain is Quinate permease (qutD) from Emericella nidulans (strain FGSC A4 / ATCC 38163 / CBS 112.46 / NRRL 194 / M139) (Aspergillus nidulans).